A 468-amino-acid chain; its full sequence is 3-isopropylmalate dehydratase large subunit (468 aa).

The disordered stretch occupies residues 53-74 (QPSKTVATMDHNVPTDSRDLAG). The [4Fe-4S] cluster site is built by C347, C407, and C410.

Belongs to the aconitase/IPM isomerase family. LeuC type 1 subfamily. In terms of assembly, heterodimer of LeuC and LeuD. [4Fe-4S] cluster is required as a cofactor.

The catalysed reaction is (2R,3S)-3-isopropylmalate = (2S)-2-isopropylmalate. The protein operates within amino-acid biosynthesis; L-leucine biosynthesis; L-leucine from 3-methyl-2-oxobutanoate: step 2/4. Catalyzes the isomerization between 2-isopropylmalate and 3-isopropylmalate, via the formation of 2-isopropylmaleate. The chain is 3-isopropylmalate dehydratase large subunit from Pasteurella multocida (strain Pm70).